Consider the following 247-residue polypeptide: Probable transcriptional regulatory protein Asuc_1803 (247 aa).

The protein belongs to the TACO1 family.

It localises to the cytoplasm. The protein is Probable transcriptional regulatory protein Asuc_1803 of Actinobacillus succinogenes (strain ATCC 55618 / DSM 22257 / CCUG 43843 / 130Z).